An 892-amino-acid polypeptide reads, in one-letter code: Ice-binding protein 1 (892 aa).

The first 23 residues, 1–23, serve as a signal peptide directing secretion; sequence MNHSIKKTYLVFTMLLGFILLAG. Cys24 carries N-palmitoyl cysteine lipidation. The S-diacylglycerol cysteine moiety is linked to residue Cys24. BIG2 domains lie at 43 to 111, 134 to 205, 221 to 288, 306 to 386, 392 to 471, 478 to 558, and 565 to 638; these read TSIA…ITAS, TALA…SLGS, SIAL…ITAD, TSIM…TVTV, TSIA…TNLT, NSIV…NLTV, and SIDV…QASL. Residues 866–869 carry the Ice-binding site motif (T-A/G-X-T/N) motif; that stretch reads TGAN.

The protein belongs to the ice-binding protein family.

It localises to the cell outer membrane. Ice-binding adhesion protein that adsorbs this bacterium onto ice to maintain a favorable position in its aquatic habitat. Inhibits growth of the ice crystals. Has high thermal hysteresis (TH) activity, which is the ability to lower the freezing point of an aqueous solution below its melting point. The TH activity of this protein is approximately 1.4 degrees Celsius at 25 uM and little below 2 degrees Celsius at 80 uM. This Shewanella frigidimarina (strain NCIMB 400) protein is Ice-binding protein 1.